The chain runs to 185 residues: Recombination protein RecR (185 aa).

The C4-type zinc-finger motif lies at 44 to 59 (CSVCFHLSSEPVCEIC). Residues 67–161 (NTICVVADSR…KVTRIAFGLP (95 aa)) form the Toprim domain.

Belongs to the RecR family.

May play a role in DNA repair. It seems to be involved in an RecBC-independent recombinational process of DNA repair. It may act with RecF and RecO. This is Recombination protein RecR from Trichormus variabilis (strain ATCC 29413 / PCC 7937) (Anabaena variabilis).